Reading from the N-terminus, the 349-residue chain is Twinfilin-2 (349 aa).

Alanine 2 bears the N-acetylalanine mark. ADF-H domains are found at residues 4–139 and 177–313; these read QTGI…KHLS and GLAF…DEVH. The residue at position 14 (lysine 14) is an N6-acetyllysine. Residue tyrosine 309 is modified to Phosphotyrosine. Residues 322-349 form a disordered region; it reads AFAKPKGPGGKRGHKRLIRGPGENGEDS. The span at 330 to 339 shows a compositional bias: basic residues; that stretch reads GGKRGHKRLI. At serine 349 the chain carries Phosphoserine.

Belongs to the actin-binding proteins ADF family. Twinfilin subfamily. Interacts with G-actin; ADP-actin form and capping protein (CP). Isoform 2 interacts (via its N-terminal ADF-H domain) with G-actin (ADP-bound form) with significantly higher affinity than isoform 1. May also be able to interact with TWF1 and phosphoinositides, PI(4,5)P2. When bound to PI(4,5)P2, it is down-regulated. Interacts with MYO7A. In terms of processing, phosphorylated on both serine/threonine and tyrosine. In terms of tissue distribution, isoform 1 is ubiquitously expressed (at protein level). Isoform 2 expression is restricted to heart and skeletal muscle where it is the predominant form.

The protein resides in the cytoplasm. It is found in the cytoskeleton. The protein localises to the perinuclear region. Its subcellular location is the cell projection. It localises to the stereocilium. Its function is as follows. Actin-binding protein involved in motile and morphological processes. Inhibits actin polymerization, likely by sequestering G-actin. By capping the barbed ends of filaments, it also regulates motility. Seems to play an important role in clathrin-mediated endocytosis and distribution of endocytic organelles. May play a role in regulating the mature length of the middle and short rows of stereocilia. This is Twinfilin-2 (Twf2) from Mus musculus (Mouse).